The sequence spans 259 residues: Short-chain dehydrogenase chry4 (259 aa).

Residues arginine 37, aspartate 55, asparagine 81, tyrosine 154, lysine 158, valine 185, and threonine 187 each contribute to the NADP(+) site. Tyrosine 154 serves as the catalytic Proton donor. Lysine 158 serves as the catalytic Lowers pKa of active site Tyr.

This sequence belongs to the short-chain dehydrogenases/reductases (SDR) family.

It participates in pigment biosynthesis. Functionally, short-chain dehydrogenase; part of the gene cluster that mediates the biosynthesis of the yellow pigment chrysogine. Pyruvic acid and anthranilic acid are likely substrates for the nonribosomal peptide synthetase chry1/NRPS14, with pyruvic acid adenylated by the first A domain and anthranilic acid by the second. If pyruvic acid and anthranilic acid are merged and released from chry1/NRPS14 by hydrolysis, a subsequent amidation would lead to 2-pyruvoylaminobenzamide. This process is probably catalyzed by the amidotransferase chry2 using glutamine as amino donor. The dehydrogenase chry5 that has a terminal berberine bridge domain for C-N cyclization could catalyze the cyclization of 2-pyruvoylaminobenzamide to yield acetyl-4(3H)-quinazolidinone. A final reduction of acetyl-4(3H)-quinazolidinone catalyzed by the oxidoreductase chry4 would result in chrysogine. The chain is Short-chain dehydrogenase chry4 from Gibberella zeae (strain ATCC MYA-4620 / CBS 123657 / FGSC 9075 / NRRL 31084 / PH-1) (Wheat head blight fungus).